Here is a 2016-residue protein sequence, read N- to C-terminus: Sodium channel protein type 5 subunit alpha (2016 aa).

The Cytoplasmic segment spans residues Met1–Val129. Residues Met28–Leu56 are disordered. Ser36 is subject to Phosphoserine. A Phosphothreonine modification is found at Thr38. The segment covering Glu41–Pro52 has biased composition (basic and acidic residues). The stretch at Val113 to Asn420 is one I repeat. Residues His130–Ala149 traverse the membrane as a helical segment. At Gln150–Thr157 the chain is on the extracellular side. The chain crosses the membrane as a helical span at residues Lys158–Arg179. Residues Gly180–Phe188 are Cytoplasmic-facing. The chain crosses the membrane as a helical span at residues Leu189 to Phe209. Residues Val210 to Ser216 lie on the Extracellular side of the membrane. Asn214 carries an N-linked (GlcNAc...) asparagine glycan. Residues Ala217–Leu236 traverse the membrane as a helical segment. Over Lys237–Lys249 the chain is Cytoplasmic. A helical membrane pass occupies residues Leu250–Phe272. Over Met273 to Ser357 the chain is Extracellular. Cys280 and Cys335 are joined by a disulfide. Residues Asn283, Asn288, Asn291, Asn318, and Asn328 are each glycosylated (N-linked (GlcNAc...) asparagine). Positions Phe358 to Tyr378 form an intramembrane region, pore-forming. Residues Gln379–Gly386 lie on the Extracellular side of the membrane. A helical transmembrane segment spans residues Lys387–Ala413. Residues Met414 to Thr719 are Cytoplasmic-facing. Ser457, Ser460, Ser483, and Ser484 each carry phosphoserine. Residues Leu461–Lys591 form a disordered region. The residue at position 486 (Thr486) is a Phosphothreonine. The segment covering Glu491–Pro503 has biased composition (basic and acidic residues). Phosphoserine occurs at positions 497 and 510. The span at Leu509–Ser528 shows a compositional bias: polar residues. Arg513 and Arg526 each carry dimethylated arginine; alternate. An omega-N-methylarginine; alternate mark is found at Arg513 and Arg526. Ser539, Ser571, Ser664, and Ser667 each carry phosphoserine. A compositionally biased stretch (polar residues) spans Thr570–Thr580. The residue at position 680 (Arg680) is a Dimethylated arginine; alternate. Arg680 bears the Omega-N-methylarginine; alternate mark. An II repeat occupies Cys699–Gly969. A helical membrane pass occupies residues Asp720 to Glu737. The Extracellular portion of the chain corresponds to His738–Glu746. Asn740 carries N-linked (GlcNAc...) asparagine glycosylation. A helical transmembrane segment spans residues Glu747 to Ile769. The Cytoplasmic portion of the chain corresponds to Ala770 to Tyr775. The helical transmembrane segment at Tyr776–Leu796 threads the bilayer. Residues Gly797–Val806 lie on the Extracellular side of the membrane. N-linked (GlcNAc...) asparagine glycosylation occurs at Asn803. The helical transmembrane segment at Leu807–Ser821 threads the bilayer. Residues Trp822–Ala838 lie on the Cytoplasmic side of the membrane. The chain crosses the membrane as a helical span at residues Leu839–Leu860. The Extracellular segment spans residues Phe861–Phe884. An N-linked (GlcNAc...) asparagine glycan is attached at Asn864. Residues Phe885–Met903 constitute an intramembrane region (pore-forming). The Extracellular portion of the chain corresponds to Trp904–Gln912. Cys906 and Cys915 form a disulfide bridge. Residues Ser913–Ser941 traverse the membrane as a helical segment. At Phe942–Glu1203 the chain is on the cytoplasmic side. Residues Ile1005–Thr1141 form a disordered region. Basic and acidic residues predominate over residues Glu1015 to Glu1030. Residues Gln1033–Pro1044 are compositionally biased toward low complexity. Over residues Ser1054 to Glu1071 the composition is skewed to acidic residues. Over residues Ser1096–Ala1113 the composition is skewed to low complexity. One copy of the III repeat lies at Pro1187–Leu1501. A helical transmembrane segment spans residues His1204–Glu1225. Residues Asp1226–Lys1236 lie on the Extracellular side of the membrane. The helical transmembrane segment at Val1237–Val1259 threads the bilayer. The Cytoplasmic segment spans residues Ala1260 to Thr1268. Residues Asn1269–Leu1291 form a helical membrane-spanning segment. Over Gly1292–Gly1297 the chain is Extracellular. Residues Pro1298–Phe1317 traverse the membrane as a helical segment. The Cytoplasmic portion of the chain corresponds to Glu1318–Ala1330. The chain crosses the membrane as a helical span at residues Ile1331–Leu1355. At Phe1356–Val1400 the chain is on the extracellular side. N-linked (GlcNAc...) asparagine glycans are attached at residues Asn1365, Asn1374, Asn1380, and Asn1388. Positions Asn1401–Met1422 form an intramembrane region, pore-forming. Residues Asp1423–Tyr1445 lie on the Extracellular side of the membrane. The chain crosses the membrane as a helical span at residues Met1446 to Ile1470. At Asp1471 to Gln1528 the chain is on the cytoplasmic side. Ser1503 bears the Phosphoserine; by PKC mark. The stretch at Ile1510–Gln1807 is one IV repeat. Residues Ala1529 to Val1547 form a helical membrane-spanning segment. Over Glu1548 to Asn1558 the chain is Extracellular. Residues Ile1559–Ala1580 form a helical membrane-spanning segment. The Cytoplasmic segment spans residues Ala1581–Asn1589. The chain crosses the membrane as a helical span at residues Ser1590–Ile1612. The Extracellular portion of the chain corresponds to Gln1613–Pro1619. A helical transmembrane segment spans residues Thr1620–Ala1640. Residues Lys1641–Leu1650 are Cytoplasmic-facing. Residues Met1651 to Phe1679 traverse the membrane as a helical segment. Residues Ala1680–Phe1697 lie on the Extracellular side of the membrane. An intramembrane region (pore-forming) is located at residues Ala1698–Asp1714. At Gly1715 to Pro1745 the chain is on the extracellular side. An N-linked (GlcNAc...) asparagine glycan is attached at Asn1736. A helical transmembrane segment spans residues Ala1746–Ile1771. The Cytoplasmic portion of the chain corresponds to Leu1772–Val2016. The segment at Asp1839–Glu1901 is interaction with FGF13. In terms of domain architecture, IQ spans Glu1901–Gln1930. The segment covering Pro1959 to Ser1979 has biased composition (low complexity). Residues Pro1959–Val2016 form a disordered region. Residues Pro1974 to Tyr1977 form an interaction with NEDD4, NEDD4L and WWP2 region. Over residues Thr1981–Val1990 the composition is skewed to polar residues.

Belongs to the sodium channel (TC 1.A.1.10) family. Nav1.5/SCN5A subfamily. In terms of assembly, cannot form the same regulatory interactions with beta subunits as other Navs do. Interacts with the PDZ domain of the syntrophin SNTA1, SNTB1 and SNTB2. Interacts with NEDD4, NEDD4L, WWP2 and GPD1L. Interacts with CALM. Interacts with FGF13; the interaction is direct and FGF13 may regulate SNC5A density at membranes and function. May also interact with FGF12 and FGF14. Interacts with TMEM233. Interacts with the spider Jingzhaotoxin-I (AC P83974, AC B1P1B7, AC B1P1B8). Interacts with ANK3. Interacts with PKP2 (via N-terminus). Interacts with XIRP2; the interaction is required for normal action potential configuration in the heart. Ubiquitinated by NEDD4L; which promotes its endocytosis. Does not seem to be ubiquitinated by NEDD4 or WWP2. In terms of processing, phosphorylation at Ser-1503 by PKC in a highly conserved cytoplasmic loop slows inactivation of the sodium channel and reduces peak sodium currents. Regulated through phosphorylation by CaMK2D. Post-translationally, lacks the cysteine which covalently binds the conotoxin GVIIJ. This cysteine (position 868) is speculated in other sodium channel subunits alpha to be implied in covalent binding with the sodium channel subunit beta-2 or beta-4. N-glycosylated at Asn-318, probably hinders potential interaction with regulatory subunits. In terms of tissue distribution, found in jejunal circular smooth muscle cells (at protein level). Expressed in human atrial and ventricular cardiac muscle but not in adult skeletal muscle, brain, myometrium, liver, or spleen. Isoform 4 is expressed in brain.

The protein localises to the cell membrane. The protein resides in the cytoplasm. It is found in the perinuclear region. Its subcellular location is the sarcolemma. It localises to the T-tubule. The protein localises to the cell junction. The enzyme catalyses Na(+)(in) = Na(+)(out). Channel inactivation is regulated by intracellular calcium levels. It is a tetrodotoxin-resistant voltage-gated Na(+) channel (Nav). Functionally, pore-forming subunit of Nav1.5, a voltage-gated sodium (Nav) channel that directly mediates the depolarizing phase of action potentials in excitable membranes. Navs, also called VGSCs (voltage-gated sodium channels) or VDSCs (voltage-dependent sodium channels), operate by switching between closed and open conformations depending on the voltage difference across the membrane. In the open conformation they allow Na(+) ions to selectively pass through the pore, along their electrochemical gradient. The influx of Na(+) ions provokes membrane depolarization, initiating the propagation of electrical signals throughout cells and tissues. Nav1.5 is the predominant sodium channel expressed in myocardial cells and it is responsible for the initial upstroke of the action potential in cardiac myocytes, thereby initiating the heartbeat. Required for normal electrical conduction including formation of the infranodal ventricular conduction system and normal action potential configuration, as a result of its interaction with XIRP2. This chain is Sodium channel protein type 5 subunit alpha, found in Homo sapiens (Human).